The sequence spans 163 residues: Aspartate 1-decarboxylase (163 aa).

S25 (schiff-base intermediate with substrate; via pyruvic acid) is an active-site residue. S25 carries the pyruvic acid (Ser) modification. A substrate-binding site is contributed by T57. Catalysis depends on Y58, which acts as the Proton donor. 73–75 (GAA) provides a ligand contact to substrate.

The protein belongs to the PanD family. As to quaternary structure, heterooctamer of four alpha and four beta subunits. Requires pyruvate as cofactor. Post-translationally, is synthesized initially as an inactive proenzyme, which is activated by self-cleavage at a specific serine bond to produce a beta-subunit with a hydroxyl group at its C-terminus and an alpha-subunit with a pyruvoyl group at its N-terminus.

The protein resides in the cytoplasm. It catalyses the reaction L-aspartate + H(+) = beta-alanine + CO2. It functions in the pathway cofactor biosynthesis; (R)-pantothenate biosynthesis; beta-alanine from L-aspartate: step 1/1. Functionally, catalyzes the pyruvoyl-dependent decarboxylation of aspartate to produce beta-alanine. The protein is Aspartate 1-decarboxylase of Saccharopolyspora erythraea (strain ATCC 11635 / DSM 40517 / JCM 4748 / NBRC 13426 / NCIMB 8594 / NRRL 2338).